The sequence spans 1026 residues: MLEDTWEEEIWEYKSKRKPKPVHPNNCSENISESVEKSTDGKHQSKGNEKRTSENPGKTKDHKVCLAETDSQISAGSSQSSSCRDESQQSQNKETTPKKQHRTRRGKQVTPKVRPVYDGYCPSCQMPFSSLLGQTPQWHVFECLDSPPISDTECPEGLLCTSTIPSHYKKYTHILLAQSRDSKEPLGSPSDALAGLFAAAAPGSPCNLEERRSMTLKTENLRKVSDHSLLMMQYLETSQPSAEINRKNVSSPCSQTSPVPQCAEFVKRDQLVGGGSPLAEVALNSQSKSGSMGLPLPENDTDSCEISYSPLHSDEETYDIDQELDDSQQELFFTQSSKDSSLEEDGSAIFENLHGPSPKEAEGIRPTAKSLVAQARCSAPSEGSTLSDSFLLLSYTSNRLSQEDLPHTDAAFHLLSPALAVGGAASNYQTSKAKLDEPEKFLSLASSHQQQKIETSAVGNQTSLPLLTRARSKPLEKEGGKCLPLHPTQSQTRGSPRKGLGAPGANCACRNAQKRSSMPLDKPLGTSPSSPKCSPSQPSKKVMKQMDIGVFFGLPPKRQETSLRESASEGPNVSPVVSPNQKRPRLCKRKAQSSLSDLEFDAKNLNESQHSVGLSGEKRQHRRKRHKTSNSPREGPCQRRSGHLMNNPELGPVSLSKAFVRRTRGRTQRGNMNISESSGAGEVRRTCPFYKRIPGTGFTVDAFQYGEIEGCTAYFLTHFHSDHYAGLSKDFTRPVYCSEITGNLLKKKLRVQEQYIRQLPMDTECVVDSVKVVLLDANHCPGATMILFQLPNGAVILHTGDFRADPSMERSRLAGRKVHTLFLDTTYCSPEYTFPSQQEVIQFAINTAFEAVTLNPRALVVCGTYCIGKEKVFLAIADVLGSKVGMSQEKYKTLQCLNIPEVSSLITTDMCDSLVHLLPMMQINFKGLQSHLKKCGGKYDQILAFRPTGWTHSNNITSTADIIPQTRGNISIYGIPYSEHSSYLEMKRFVQWLKPQKIIPTVNVGSFRSRNTMEKYFKEWRLEAGY.

Residues 1-189 (MLEDTWEEEI…RDSKEPLGSP (189 aa)) form a nuclear localization region region. The tract at residues 12–110 (EYKSKRKPKP…HRTRRGKQVT (99 aa)) is disordered. A compositionally biased stretch (basic and acidic residues) spans 34–65 (SVEKSTDGKHQSKGNEKRTSENPGKTKDHKVC). Residues 71 to 82 (SQISAGSSQSSS) show a composition bias toward low complexity. A compositionally biased stretch (basic residues) spans 98–107 (KKQHRTRRGK). The UBZ4-type zinc-finger motif lies at 118-148 (DGYCPSCQMPFSSLLGQTPQWHVFECLDSPP). Zn(2+) contacts are provided by C121, C124, H139, and C143. Glycyl lysine isopeptide (Lys-Gly) (interchain with G-Cter in SUMO2) cross-links involve residues K359, K434, and K522. Positions 401 to 602 (SQEDLPHTDA…SSLSDLEFDA (202 aa)) are nuclear focus formation. 3 disordered regions span residues 474-542 (PLEK…SKKV), 560-590 (ETSL…CKRK), and 602-651 (AKNL…PELG). Over residues 527–540 (SPSSPKCSPSQPSK) the composition is skewed to low complexity. Over residues 569–581 (EGPNVSPVVSPNQ) the composition is skewed to polar residues. Residues S574 and S578 each carry the phosphoserine modification. Residues 619 to 628 (RQHRRKRHKT) are compositionally biased toward basic residues. A Glycyl lysine isopeptide (Lys-Gly) (interchain with G-Cter in SUMO2) cross-link involves residue K657.

It belongs to the DNA repair metallo-beta-lactamase (DRMBL) family. As to quaternary structure, binds constitutively to TP53BP1. Binds CDC27, which is itself a component of the anaphase promoting complex (APC). Binds PIAS1.

It localises to the nucleus. The catalysed reaction is a beta-lactam + H2O = a substituted beta-amino acid. In terms of biological role, may be required for DNA interstrand cross-link repair. Also required for checkpoint mediated cell cycle arrest in early prophase in response to mitotic spindle poisons. The chain is DNA cross-link repair 1A protein (Dclre1a) from Mus musculus (Mouse).